We begin with the raw amino-acid sequence, 615 residues long: Putative binding protein BRA0576/BS1330_II0571 (615 aa).

Residues 1–29 form the signal peptide; sequence MLNRFIAFFRSVFLIGLVATAFGALPARA.

Belongs to the bacterial solute-binding protein 5 family.

It localises to the periplasm. The protein is Putative binding protein BRA0576/BS1330_II0571 of Brucella suis biovar 1 (strain 1330).